The sequence spans 122 residues: Large ribosomal subunit protein uL14 (122 aa).

The protein belongs to the universal ribosomal protein uL14 family. In terms of assembly, part of the 50S ribosomal subunit. Forms a cluster with proteins L3 and L19. In the 70S ribosome, L14 and L19 interact and together make contacts with the 16S rRNA in bridges B5 and B8.

Functionally, binds to 23S rRNA. Forms part of two intersubunit bridges in the 70S ribosome. The sequence is that of Large ribosomal subunit protein uL14 from Laribacter hongkongensis (strain HLHK9).